A 513-amino-acid chain; its full sequence is Varicidin biosynthesis cluster-specific transcription factor (513 aa).

Positions 16–54 form a DNA-binding region, zn(2)-C6 fungal-type; it reads CERCRLHKLKCTILPQKRFEGPQEAPEQCTRCARAKAKC. Disordered stretches follow at residues 58–92 and 97–116; these read RRAP…MQPN and VSSH…SSLK. The segment covering 67 to 76 has biased composition (low complexity); sequence SSSNDRSSVS. Positions 77–92 are enriched in polar residues; that stretch reads KGINSTTPATRTMQPN.

It localises to the nucleus. Its function is as follows. Transcription factor that regulates the expression of the gene cluster that mediates the biosynthesis of varicidin A, an antifungal natural product containing a cis-octahydrodecalin core. This chain is Varicidin biosynthesis cluster-specific transcription factor, found in Talaromyces variabilis (Penicillium variabile).